Reading from the N-terminus, the 341-residue chain is MDIFREIASSMKGENVFISPPSISSVLTILYYGANGSTAEQLSKYVEKEADKNKDDISFKSMNKVYGRYSAVFKDSFLRKIGDNFQTVDFTDCRTVDAINKCVDIFTEGKINPLLDEPLSPDTCLLAISAVYFKAKWLMPFEKEFTSDYPFYVSPTEMVDVSMMSMYGEAFNHASVKESFGNFSIIELPYVGDTSMVVILPDNIDGLESIEQNLTDTNFKKWCDSMDAMFIDVHIPKFKVTGSYNLVDALVKLGLTEVFGSTGDYSNMCNSDVSVDAMIHKTYIDVNEEYTEAAAATCALVADCASTVTNEFCADHPFIYVIRHVDGKILFVGRYCSPTTN.

Belongs to the serpin family. Poxviruses subfamily.

Its subcellular location is the host cytoplasm. Functionally, viral serpin that inhibits both cysteine and serine proteinases involved in the regulation of host inflammatory and apoptosis processes. Major anti-apoptotic protein which inhibits both intrinsic and extrinsic pathways and strongly cleaves host CASP1 and CASP8 but is a rather poor inhibitor of host CASP3. Prevents the proteolytic activity of host interleukin-1-beta converting enzyme (ICE) and ICE-like enzymes. Can also block apoptosis through host tumor necrosis factor (TNF) receptor. This chain is Serine proteinase inhibitor 2 (OPG199), found in Bos taurus (Bovine).